The chain runs to 241 residues: Folate receptor alpha (241 aa).

Positions 1-19 (MAWQMTQLLLLALVAAAWG) are cleaved as a signal peptide. 8 disulfide bridges follow: C36/C64, C56/C104, C65/C108, C88/C174, C95/C145, C134/C208, C138/C188, and C151/C168. N68 carries N-linked (GlcNAc...) asparagine glycosylation. Residues D102, Y106, 123-127 (WRKER), 156-161 (HKGWNW), and S195 contribute to the folate site. N160 carries an N-linked (GlcNAc...) asparagine glycan. S234 carries GPI-anchor amidated serine lipidation. Residues 235-241 (GSTPQGI) constitute a propeptide, removed in mature form.

The protein belongs to the folate receptor family. The secreted form is derived from the membrane-bound form either by cleavage of the GPI anchor, or/and by proteolysis catalyzed by a metalloprotease. In terms of tissue distribution, detected in milk (at protein level).

It is found in the cell membrane. The protein resides in the apical cell membrane. The protein localises to the basolateral cell membrane. Its subcellular location is the secreted. It localises to the cytoplasmic vesicle. It is found in the clathrin-coated vesicle. The protein resides in the endosome. Binds to folate and reduced folic acid derivatives and mediates delivery of 5-methyltetrahydrofolate and folate analogs into the interior of cells. Has high affinity for folate and folic acid analogs at neutral pH. Exposure to slightly acidic pH after receptor endocytosis triggers a conformation change that strongly reduces its affinity for folates and mediates their release. Required for normal embryonic development and normal cell proliferation. The chain is Folate receptor alpha (FOLR1) from Bos taurus (Bovine).